The following is a 681-amino-acid chain: DNA ligase (681 aa).

Residues 42–46 (DAEYD), 91–92 (SL), and glutamate 120 contribute to the NAD(+) site. Residue lysine 122 is the N6-AMP-lysine intermediate of the active site. NAD(+) contacts are provided by arginine 143, glutamate 180, lysine 302, and lysine 326. The Zn(2+) site is built by cysteine 420, cysteine 423, cysteine 438, and cysteine 444. One can recognise a BRCT domain in the interval 603–681 (ADAQPLLGQT…EAGLIELIGL (79 aa)).

It belongs to the NAD-dependent DNA ligase family. LigA subfamily. Requires Mg(2+) as cofactor. Mn(2+) serves as cofactor.

The catalysed reaction is NAD(+) + (deoxyribonucleotide)n-3'-hydroxyl + 5'-phospho-(deoxyribonucleotide)m = (deoxyribonucleotide)n+m + AMP + beta-nicotinamide D-nucleotide.. Its function is as follows. DNA ligase that catalyzes the formation of phosphodiester linkages between 5'-phosphoryl and 3'-hydroxyl groups in double-stranded DNA using NAD as a coenzyme and as the energy source for the reaction. It is essential for DNA replication and repair of damaged DNA. The polypeptide is DNA ligase (Shewanella amazonensis (strain ATCC BAA-1098 / SB2B)).